Here is a 260-residue protein sequence, read N- to C-terminus: Putative cysteine-rich repeat secretory protein 23 (260 aa).

Positions 1-31 are cleaved as a signal peptide; that stretch reads MSSSFVYKSLFLVPILAVVAMQLSFVQSVLS. 2 Gnk2-homologous domains span residues 38-136 and 142-254; these read YLHH…NISY and LPEQ…LYLF.

It belongs to the cysteine-rich repeat secretory protein family.

It localises to the secreted. This chain is Putative cysteine-rich repeat secretory protein 23 (CRRSP23), found in Arabidopsis thaliana (Mouse-ear cress).